The primary structure comprises 91 residues: Small ribosomal subunit protein uS17 (91 aa).

The protein belongs to the universal ribosomal protein uS17 family. In terms of assembly, part of the 30S ribosomal subunit.

One of the primary rRNA binding proteins, it binds specifically to the 5'-end of 16S ribosomal RNA. In Acidithiobacillus ferrooxidans (strain ATCC 23270 / DSM 14882 / CIP 104768 / NCIMB 8455) (Ferrobacillus ferrooxidans (strain ATCC 23270)), this protein is Small ribosomal subunit protein uS17.